We begin with the raw amino-acid sequence, 429 residues long: Histidinol dehydrogenase (429 aa).

The NAD(+) site is built by tyrosine 130, glutamine 191, and asparagine 214. Positions 237, 259, and 262 each coordinate substrate. Glutamine 259 and histidine 262 together coordinate Zn(2+). Active-site proton acceptor residues include glutamate 327 and histidine 328. Substrate contacts are provided by histidine 328, aspartate 361, glutamate 415, and histidine 420. Position 361 (aspartate 361) interacts with Zn(2+). Zn(2+) is bound at residue histidine 420.

It belongs to the histidinol dehydrogenase family. It depends on Zn(2+) as a cofactor.

It catalyses the reaction L-histidinol + 2 NAD(+) + H2O = L-histidine + 2 NADH + 3 H(+). The protein operates within amino-acid biosynthesis; L-histidine biosynthesis; L-histidine from 5-phospho-alpha-D-ribose 1-diphosphate: step 9/9. Functionally, catalyzes the sequential NAD-dependent oxidations of L-histidinol to L-histidinaldehyde and then to L-histidine. In Neisseria meningitidis serogroup B (strain ATCC BAA-335 / MC58), this protein is Histidinol dehydrogenase.